The chain runs to 86 residues: Neurotoxin homolog NL1 (86 aa).

The signal sequence occupies residues Met-1–Thr-21. Disulfide bonds link Cys-24–Cys-45, Cys-38–Cys-62, Cys-66–Cys-78, and Cys-79–Cys-84.

This sequence belongs to the three-finger toxin family. Short-chain subfamily. Orphan group VIII (haditoxin) sub-subfamily. In terms of assembly, homodimer; non-covalently linked. As to expression, expressed by the venom gland.

It is found in the secreted. Its function is as follows. Antagonist of muscle and neuronal nicotinic acetylcholine receptors (nAChR) with highest affinity for neuronal alpha-7/CHRNA7 nAChRs. This chain is Neurotoxin homolog NL1, found in Naja atra (Chinese cobra).